Reading from the N-terminus, the 294-residue chain is Phosphonoacetaldehyde hydrolase (294 aa).

Catalysis depends on D19, which acts as the Nucleophile. Residues D19 and A21 each contribute to the Mg(2+) site. Catalysis depends on K60, which acts as the Schiff-base intermediate with substrate. D193 contributes to the Mg(2+) binding site.

It belongs to the HAD-like hydrolase superfamily. PhnX family. In terms of assembly, homodimer. It depends on Mg(2+) as a cofactor.

The enzyme catalyses phosphonoacetaldehyde + H2O = acetaldehyde + phosphate + H(+). In terms of biological role, involved in phosphonate degradation. The protein is Phosphonoacetaldehyde hydrolase of Hahella chejuensis (strain KCTC 2396).